A 1353-amino-acid chain; its full sequence is DNA-directed RNA polymerase subunit beta' (1353 aa).

A unknown region spans residues 1–117 (MSDNRLFTSV…AFQKLNDLFK (117 aa)). The interval 118-1353 (LYNHFPSISS…SELTKKTNQN (1236 aa)) is DNA-directed RNA polymerase subunit beta'. 4 residues coordinate Zn(2+): cysteine 189, cysteine 191, cysteine 203, and cysteine 206. Mg(2+) contacts are provided by aspartate 578, aspartate 580, and aspartate 582.

It belongs to the RNA polymerase beta' chain family. The RNAP catalytic core consists of 2 alpha, 1 beta, 1 beta' and 1 omega subunit. When a sigma factor is associated with the core the holoenzyme is formed, which can initiate transcription. It depends on Mg(2+) as a cofactor. Zn(2+) serves as cofactor.

It carries out the reaction RNA(n) + a ribonucleoside 5'-triphosphate = RNA(n+1) + diphosphate. DNA-dependent RNA polymerase catalyzes the transcription of DNA into RNA using the four ribonucleoside triphosphates as substrates. This is DNA-directed RNA polymerase subunit beta' from Aster yellows witches'-broom phytoplasma (strain AYWB).